The sequence spans 440 residues: Xylose isomerase (440 aa).

Residues histidine 100 and aspartate 103 contribute to the active site. Residues glutamate 231, glutamate 267, histidine 270, aspartate 295, aspartate 306, aspartate 308, and aspartate 338 each contribute to the Mg(2+) site.

The protein belongs to the xylose isomerase family. Homotetramer. The cofactor is Mg(2+).

It localises to the cytoplasm. The enzyme catalyses alpha-D-xylose = alpha-D-xylulofuranose. This chain is Xylose isomerase, found in Paraburkholderia phytofirmans (strain DSM 17436 / LMG 22146 / PsJN) (Burkholderia phytofirmans).